The primary structure comprises 267 residues: Undecaprenyl-diphosphatase (267 aa).

Transmembrane regions (helical) follow at residues 4 to 24 (ILII…PISS), 41 to 61 (NIQN…ILLF), 84 to 104 (ILIL…GFMF), 116 to 136 (YISY…FISL), 160 to 180 (CFSL…GLIL), 185 to 205 (YVLF…VLIL), 216 to 236 (ENIF…LIFG), and 246 to 266 (TSLI…LFTC).

Belongs to the UppP family.

It is found in the cell membrane. The catalysed reaction is di-trans,octa-cis-undecaprenyl diphosphate + H2O = di-trans,octa-cis-undecaprenyl phosphate + phosphate + H(+). Its function is as follows. Catalyzes the dephosphorylation of undecaprenyl diphosphate (UPP). Confers resistance to bacitracin. The chain is Undecaprenyl-diphosphatase from Wigglesworthia glossinidia brevipalpis.